The chain runs to 542 residues: DM7 family protein CG15333 (542 aa).

The protein belongs to the DM7 family.

In Drosophila melanogaster (Fruit fly), this protein is DM7 family protein CG15333.